Consider the following 122-residue polypeptide: MSTHSRPARVAEEFRHGLADVIARGLKDPRVTGFITVTGAKMSPDLKEVTAYVSIHAEDAERERTLEGLKAASTFLQREVARSLRLRHTPHLRFVYDESVARGDRIERLLKEAREKDSHGES.

Belongs to the RbfA family. In terms of assembly, monomer. Binds 30S ribosomal subunits, but not 50S ribosomal subunits or 70S ribosomes.

It is found in the cytoplasm. Its function is as follows. One of several proteins that assist in the late maturation steps of the functional core of the 30S ribosomal subunit. Associates with free 30S ribosomal subunits (but not with 30S subunits that are part of 70S ribosomes or polysomes). Required for efficient processing of 16S rRNA. May interact with the 5'-terminal helix region of 16S rRNA. This Anaeromyxobacter sp. (strain Fw109-5) protein is Ribosome-binding factor A.